The following is a 75-amino-acid chain: Acyl carrier protein (75 aa).

Residues 1–75 (MALFDDVKEV…GDAIKFIENV (75 aa)) enclose the Carrier domain. O-(pantetheine 4'-phosphoryl)serine is present on Ser-36.

Belongs to the acyl carrier protein (ACP) family. 4'-phosphopantetheine is transferred from CoA to a specific serine of apo-ACP by AcpS. This modification is essential for activity because fatty acids are bound in thioester linkage to the sulfhydryl of the prosthetic group.

It localises to the cytoplasm. It functions in the pathway lipid metabolism; fatty acid biosynthesis. In terms of biological role, carrier of the growing fatty acid chain in fatty acid biosynthesis. This is Acyl carrier protein from Sulfurovum sp. (strain NBC37-1).